An 849-amino-acid chain; its full sequence is Putative respiratory burst oxidase homolog protein G (849 aa).

The span at Met1–Ser17 shows a compositional bias: basic and acidic residues. Residues Met1–Leu53 are disordered. Over Met1 to Arg303 the chain is Cytoplasmic. Low complexity predominate over residues Ser18–Ser27. 2 EF-hand-like regions span residues Thr118–Ser128 and Ser153–Glu164. 2 consecutive EF-hand domains span residues Ser176–Ala211 and Lys220–Lys255. Residues Asp189, Asp191, Asp193, Arg195, and Glu200 each contribute to the Ca(2+) site. Ser270 carries the post-translational modification Phosphoserine. Residues Val304 to Gln324 form a helical membrane-spanning segment. Residues Tyr325–Gly392 are Extracellular-facing. A Ferric oxidoreductase domain is found at Lys342–Val502. The chain crosses the membrane as a helical span at residues Ile393–Phe409. At Pro410–Gly444 the chain is on the cytoplasmic side. The chain crosses the membrane as a helical span at residues Ile445 to Phe465. Over Arg466–Tyr489 the chain is Extracellular. A helical membrane pass occupies residues Thr490–Leu510. Topologically, residues Asn511 to Thr518 are cytoplasmic. The helical transmembrane segment at Thr519 to Ile536 threads the bilayer. Over Arg537 to Lys659 the chain is Extracellular. The 117-residue stretch at Ser541–Asp657 folds into the FAD-binding FR-type domain. A helical transmembrane segment spans residues Lys660–Ile680. Over Lys681–Phe849 the chain is Cytoplasmic.

The protein belongs to the RBOH (TC 5.B.1.3) family. As to quaternary structure, monomer and homodimer.

It is found in the membrane. In terms of biological role, calcium-dependent NADPH oxidase that generates superoxide. This is Putative respiratory burst oxidase homolog protein G (RBOHG) from Arabidopsis thaliana (Mouse-ear cress).